Here is a 1434-residue protein sequence, read N- to C-terminus: Probable ATP-dependent RNA helicase spindle-E (1434 aa).

The disordered stretch occupies residues 66-86 (VGGPSNTKRTKTLDELESDDD). The 168-residue stretch at 127 to 294 (MKAIKENPVV…FASCKSMPPV (168 aa)) folds into the Helicase ATP-binding domain. Position 140-147 (140-147 (GETGCGKT)) interacts with ATP. The DEAH box signature appears at 240 to 243 (DEVH). A Helicase C-terminal domain is found at 354-526 (QSEQSYEEAK…SSVLKAKELD (173 aa)). In terms of domain architecture, Tudor spans 938-1001 (ASAITKGLQL…RLMRHELRRD (64 aa)).

The protein belongs to the DEAD box helicase family. DEAH subfamily.

It is found in the cytoplasm. It carries out the reaction ATP + H2O = ADP + phosphate + H(+). Functionally, probable ATP-binding RNA helicase which plays a central role during spermatogenesis and oogenesis by repressing transposable elements and preventing their mobilization, which is essential for the germline integrity. Acts via the piRNA metabolic process, which mediates the repression of transposable elements during meiosis by forming complexes composed of piRNAs and Piwi and govern the methylation and subsequent repression of transposons. Involved in the repression of LTR retrotransposon copia. Also involved in telomere regulation by repressing specialized telomeric retroelements HeT-A, TAHRE, and TART; Drosophila telomeres being maintained by transposition of specialized telomeric retroelements. Involved in telomeric trans-silencing, a repression mechanism by which a transposon or a transgene inserted in subtelomeric heterochromatin has the capacity to repress in trans in the female germline, a homologous transposon, or transgene located in euchromatin. Involved in the repression of testis-expressed Stellate genes by the homologous Su(Ste) repeats. Required for anteroposterior and dorsoventral axis formation during oogenesis. This chain is Probable ATP-dependent RNA helicase spindle-E (spn-E), found in Drosophila grimshawi (Hawaiian fruit fly).